A 735-amino-acid chain; its full sequence is Photosystem I P700 chlorophyll a apoprotein A2 (735 aa).

8 helical membrane passes run 46–69, 135–158, 175–199, 273–291, 333–356, 372–398, 420–442, and 518–536; these read LFST…FHIA, LYQG…LHLQ, LNHH…HVAI, IAHH…GHMY, LHFQ…QHMY, AALY…IFFI, AIIS…LYVH, and FLVH…LILV. The [4Fe-4S] cluster site is built by Cys560 and Cys569. The next 2 helical transmembrane spans lie at 576-597 and 644-666; these read AFYL…YWHW and LAVW…MFLI. Chlorophyll a-binding residues include His655, Met663, and Tyr671. Trp672 contacts phylloquinone. Residues 708–728 traverse the membrane as a helical segment; that stretch reads VVGLAHFSVGYVLTYAAFLIA.

It belongs to the PsaA/PsaB family. The PsaA/B heterodimer binds the P700 chlorophyll special pair and subsequent electron acceptors. PSI consists of a core antenna complex that captures photons, and an electron transfer chain that converts photonic excitation into a charge separation. The cyanobacterial PSI reaction center is composed of one copy each of PsaA,B,C,D,E,F,I,J,K,L,M and X, and forms trimeric complexes. It depends on PSI electron transfer chain: 5 chlorophyll a, 1 chlorophyll a', 2 phylloquinones and 3 4Fe-4S clusters. PSI core antenna: 90 chlorophyll a, 22 carotenoids, 3 phospholipids and 1 galactolipid. P700 is a chlorophyll a/chlorophyll a' dimer, A0 is one or more chlorophyll a, A1 is one or both phylloquinones and FX is a shared 4Fe-4S iron-sulfur center. as a cofactor.

Its subcellular location is the cellular thylakoid membrane. It carries out the reaction reduced [plastocyanin] + hnu + oxidized [2Fe-2S]-[ferredoxin] = oxidized [plastocyanin] + reduced [2Fe-2S]-[ferredoxin]. PsaA and PsaB bind P700, the primary electron donor of photosystem I (PSI), as well as the electron acceptors A0, A1 and FX. PSI is a plastocyanin/cytochrome c6-ferredoxin oxidoreductase, converting photonic excitation into a charge separation, which transfers an electron from the donor P700 chlorophyll pair to the spectroscopically characterized acceptors A0, A1, FX, FA and FB in turn. Oxidized P700 is reduced on the lumenal side of the thylakoid membrane by plastocyanin or cytochrome c6. The chain is Photosystem I P700 chlorophyll a apoprotein A2 from Synechococcus sp. (strain CC9902).